We begin with the raw amino-acid sequence, 393 residues long: Chalcone synthase 3 (393 aa).

Cys-166 is an active-site residue.

Belongs to the thiolase-like superfamily. Chalcone/stilbene synthases family.

The catalysed reaction is (E)-4-coumaroyl-CoA + 3 malonyl-CoA + 3 H(+) = 2',4,4',6'-tetrahydroxychalcone + 3 CO2 + 4 CoA. Its pathway is secondary metabolite biosynthesis; flavonoid biosynthesis. In terms of biological role, the primary product of this enzyme is 4,2',4',6'-tetrahydroxychalcone (also termed naringenin-chalcone or chalcone) which can under specific conditions spontaneously isomerize into naringenin. This is Chalcone synthase 3 (CHS3) from Ruta graveolens (Common rue).